The chain runs to 206 residues: Ras-related protein Ral-B (206 aa).

21 to 29 (GSGGVGKSA) is a binding site for GTP. The Effector region signature appears at 43 to 51 (YEPTKADSY). GTP contacts are provided by residues 68–72 (DTAGQ), 128–131 (NKSD), and 158–160 (SAK). Positions 181 to 206 (MSENKDKNGRKSSKSKKSFKERCCLL) are disordered. A Cysteine methyl ester modification is found at C203. C203 carries the S-geranylgeranyl cysteine lipid modification. The propeptide at 204–206 (CLL) is removed in mature form.

This sequence belongs to the small GTPase superfamily. Ras family. As to quaternary structure, interacts with EXOC2/Sec5 and EXOC8/Exo84. Interacts (via effector domain) with RALBP1. Post-translationally, prenylation is essential for membrane localization. In terms of processing, the farnesylated form confers resistance to the proapoptotic and anti-anchorage-dependent growth effects of some geranylgeranyltransferase I inhibitors.

It is found in the cell membrane. Its subcellular location is the midbody. The enzyme catalyses GTP + H2O = GDP + phosphate + H(+). Its activity is regulated as follows. Alternates between an inactive form bound to GDP and an active form bound to GTP. Activated by a guanine nucleotide-exchange factor (GEF) and inactivated by a GTPase-activating protein (GAP). Multifunctional GTPase involved in a variety of cellular processes including gene expression, cell migration, cell proliferation, oncogenic transformation and membrane trafficking. Accomplishes its multiple functions by interacting with distinct downstream effectors. Acts as a GTP sensor for GTP-dependent exocytosis of dense core vesicles. Required both to stabilize the assembly of the exocyst complex and to localize functional exocyst complexes to the leading edge of migrating cells. Required for suppression of apoptosis. In late stages of cytokinesis, upon completion of the bridge formation between dividing cells, mediates exocyst recruitment to the midbody to drive abscission. Involved in ligand-dependent receptor mediated endocytosis of the EGF and insulin receptors. This is Ras-related protein Ral-B (Ralb) from Mus musculus (Mouse).